Consider the following 145-residue polypeptide: D-aminoacyl-tRNA deacylase (145 aa).

The Gly-cisPro motif, important for rejection of L-amino acids motif lies at G137 to P138.

It belongs to the DTD family. As to quaternary structure, homodimer.

It localises to the cytoplasm. It carries out the reaction glycyl-tRNA(Ala) + H2O = tRNA(Ala) + glycine + H(+). The enzyme catalyses a D-aminoacyl-tRNA + H2O = a tRNA + a D-alpha-amino acid + H(+). Functionally, an aminoacyl-tRNA editing enzyme that deacylates mischarged D-aminoacyl-tRNAs. Also deacylates mischarged glycyl-tRNA(Ala), protecting cells against glycine mischarging by AlaRS. Acts via tRNA-based rather than protein-based catalysis; rejects L-amino acids rather than detecting D-amino acids in the active site. By recycling D-aminoacyl-tRNA to D-amino acids and free tRNA molecules, this enzyme counteracts the toxicity associated with the formation of D-aminoacyl-tRNA entities in vivo and helps enforce protein L-homochirality. The sequence is that of D-aminoacyl-tRNA deacylase from Pseudoalteromonas atlantica (strain T6c / ATCC BAA-1087).